Reading from the N-terminus, the 234-residue chain is Glutathione S-transferase 1 (234 aa).

The 88-residue stretch at 3–90 (LPIIKVHWLD…YVLQHFDHSH (88 aa)) folds into the GST N-terminal domain. Residues 96-234 (DADIADQINY…EKARALGSNF (139 aa)) form the GST C-terminal domain.

The protein belongs to the GST superfamily. In terms of assembly, homodimer.

The protein localises to the endoplasmic reticulum membrane. The catalysed reaction is RX + glutathione = an S-substituted glutathione + a halide anion + H(+). This chain is Glutathione S-transferase 1 (GTT1), found in Saccharomyces cerevisiae (strain ATCC 204508 / S288c) (Baker's yeast).